Here is a 2556-residue protein sequence, read N- to C-terminus: Non-reducing polyketide synthase tazA (2556 aa).

Positions 16-270 (LFGPQALSFT…QAIGLRGRFH (255 aa)) are N-terminal acylcarrier protein transacylase domain (SAT). C143 (nucleophile; for transacylase activity) is an active-site residue. H270 acts as the Proton donor/acceptor; for transacylase activity in catalysis. Positions 397-769 (EDEIAVIGMA…GSNASMIVTQ (373 aa)) constitute a Ketosynthase family 3 (KS3) domain. The tract at residues 876–1209 (CFGGQISRFV…WAHHCTQAPA (334 aa)) is malonyl-CoA:ACP transacylase (MAT) domain. The tract at residues 1254-1383 (YTFVGYQDEG…GQIIFQSAAE (130 aa)) is N-terminal hotdog fold. The PKS/mFAS DH domain maps to 1254–1560 (YTFVGYQDEG…YSRLPKSTMS (307 aa)). The tract at residues 1257–1564 (VGYQDEGKRQ…PKSTMSKMLT (308 aa)) is product template (PT) domain. H1285 serves as the catalytic Proton acceptor; for dehydratase activity. Positions 1408–1560 (DPDDVLQGRN…YSRLPKSTMS (153 aa)) are C-terminal hotdog fold. D1465 serves as the catalytic Proton donor; for dehydratase activity. Residues 1567–1621 (TAPSERRAQVDSPSMPASINAPPSASEQAPVEPAPQTKESAPIAEPGAGGQSNSK) are disordered. Over residues 1577-1593 (DSPSMPASINAPPSASE) the composition is skewed to polar residues. The region spanning 1620 to 1694 (SKVPGIVVEV…DVVQCVHKTL (75 aa)) is the Carrier domain. S1654 bears the O-(pantetheine 4'-phosphoryl)serine mark. Residues 1700 to 1731 (SAAQESEGNLTPASSGTQSPRSDPVSDTSLSD) are disordered. Over residues 1702 to 1731 (AQESEGNLTPASSGTQSPRSDPVSDTSLSD) the composition is skewed to polar residues. Residues 1830–2107 (LEHEGRLIDI…DWTDGHLAEN (278 aa)) are methyltransferase domain. The segment at 2180–2424 (VTGATGSLGA…WTPVDVVAST (245 aa)) is NADPH-binding (R) domain.

The cofactor is pantetheine 4'-phosphate.

The protein operates within secondary metabolite biosynthesis. Non-reducing polyketide synthase; part of the gene cluster that mediates the biosynthesis of azaterrilone A and other azaphilones, a class of fungal metabolites characterized by a highly oxygenated pyrano-quinone bicyclic core and exhibiting a broad range of bioactivities. The first step of the pathway begins with tazA that assembles one acetyl-CoA starter unit, five malonyl-CoA units, and catalyzes a series of Claisen condensations, methylation, PT-mediated cyclization, and finally releases the first hexaketide precursor through the R-domain. The tazA product then undergoes reduction on its terminal ketone and the following pyran-ring formation by yet undetermined enzyme(s). Dehydration and enoyl reduction, possibly involving the trans-enoyl reductase tazE leads to the next intermediate. TazD is predicted as an acetyltransferase and might catalyze the acetylation steps leading to the synthesis of azaterrilone A. Azaterrilone A is not the final product of the taz pathway and both the highly reducing polyketide synthase tazB and the dual enzyme tazHJ catalyze late steps of the pathway, leading to the production of the 2 final stereoisomers that contain additional polyketide modification whose structures have still to be determined. The chain is Non-reducing polyketide synthase tazA from Aspergillus terreus (strain NIH 2624 / FGSC A1156).